The primary structure comprises 118 residues: Small ribosomal subunit protein uS13 (118 aa).

Residues 94-118 (GLPVRGQRTKTNARTRKGPRKPIRK) are disordered.

It belongs to the universal ribosomal protein uS13 family. In terms of assembly, part of the 30S ribosomal subunit. Forms a loose heterodimer with protein S19. Forms two bridges to the 50S subunit in the 70S ribosome.

In terms of biological role, located at the top of the head of the 30S subunit, it contacts several helices of the 16S rRNA. In the 70S ribosome it contacts the 23S rRNA (bridge B1a) and protein L5 of the 50S subunit (bridge B1b), connecting the 2 subunits; these bridges are implicated in subunit movement. Contacts the tRNAs in the A and P-sites. The polypeptide is Small ribosomal subunit protein uS13 (Marinobacter nauticus (strain ATCC 700491 / DSM 11845 / VT8) (Marinobacter aquaeolei)).